We begin with the raw amino-acid sequence, 415 residues long: [Pyruvate dehydrogenase (acetyl-transferring)] kinase isozyme 3, mitochondrial (415 aa).

The Histidine kinase domain maps to 131 to 362 (IEYKEKFGFD…DAVIYLKALS (232 aa)). 247 to 254 (ELFKNSMR) lines the ATP pocket. At K278 the chain carries N6-succinyllysine. ATP contacts are provided by residues D287, 306-307 (ST), and 323-328 (GFGYGL). A disordered region spans residues 383–415 (TPEADDWSNPSSEPRDASKYKAKQDKIKSNRTF). The span at 395-415 (EPRDASKYKAKQDKIKSNRTF) shows a compositional bias: basic and acidic residues.

Belongs to the PDK/BCKDK protein kinase family. In terms of assembly, homodimer. Interacts with the pyruvate dehydrogenase complex subunit DLAT, and is part of the multimeric pyruvate dehydrogenase complex that contains multiple copies of pyruvate dehydrogenase (E1), dihydrolipoamide acetyltransferase (DLAT, E2) and lipoamide dehydrogenase (DLD, E3).

The protein resides in the mitochondrion matrix. The enzyme catalyses L-seryl-[pyruvate dehydrogenase E1 alpha subunit] + ATP = O-phospho-L-seryl-[pyruvate dehydrogenase E1 alpha subunit] + ADP + H(+). Its function is as follows. Inhibits pyruvate dehydrogenase activity by phosphorylation of the E1 subunit PDHA1, and thereby regulates glucose metabolism and aerobic respiration. Can also phosphorylate PDHA2. Decreases glucose utilization and increases fat metabolism in response to prolonged fasting, and as adaptation to a high-fat diet. Plays a role in glucose homeostasis and in maintaining normal blood glucose levels in function of nutrient levels and under starvation. Plays a role in the generation of reactive oxygen species. This chain is [Pyruvate dehydrogenase (acetyl-transferring)] kinase isozyme 3, mitochondrial (Pdk3), found in Mus musculus (Mouse).